The sequence spans 122 residues: Small ribosomal subunit protein uS13 (122 aa).

Residues 95–122 (GLPVRGQRTHTNARTRKGPRRGTVGKKK) form a disordered region.

It belongs to the universal ribosomal protein uS13 family. In terms of assembly, part of the 30S ribosomal subunit. Forms a loose heterodimer with protein S19. Forms two bridges to the 50S subunit in the 70S ribosome.

Its function is as follows. Located at the top of the head of the 30S subunit, it contacts several helices of the 16S rRNA. In the 70S ribosome it contacts the 23S rRNA (bridge B1a) and protein L5 of the 50S subunit (bridge B1b), connecting the 2 subunits; these bridges are implicated in subunit movement. Contacts the tRNAs in the A and P-sites. This is Small ribosomal subunit protein uS13 from Nitratidesulfovibrio vulgaris (strain ATCC 29579 / DSM 644 / CCUG 34227 / NCIMB 8303 / VKM B-1760 / Hildenborough) (Desulfovibrio vulgaris).